Reading from the N-terminus, the 251-residue chain is Probable transcriptional regulatory protein TGRD_462 (251 aa).

This sequence belongs to the TACO1 family.

It is found in the cytoplasm. This is Probable transcriptional regulatory protein TGRD_462 from Endomicrobium trichonymphae.